A 449-amino-acid polypeptide reads, in one-letter code: Aminopeptidase C (449 aa).

Residues Cys-70, His-364, and Asn-385 contribute to the active site.

Belongs to the peptidase C1 family. In terms of assembly, homohexamer.

The protein resides in the cytoplasm. The enzyme catalyses Inactivates bleomycin B2 (a cytotoxic glycometallopeptide) by hydrolysis of a carboxyamide bond of beta-aminoalanine, but also shows general aminopeptidase activity. The specificity varies somewhat with source, but amino acid arylamides of Met, Leu and Ala are preferred.. In Lactobacillus delbrueckii subsp. lactis, this protein is Aminopeptidase C (pepC).